We begin with the raw amino-acid sequence, 425 residues long: Dihydroorotase (425 aa).

Zn(2+)-binding residues include histidine 56 and histidine 58. Residues 58 to 60 (HWR) and asparagine 90 each bind substrate. Residues aspartate 147, histidine 174, and histidine 227 each coordinate Zn(2+). Asparagine 273 is a binding site for substrate. Aspartate 300 serves as a coordination point for Zn(2+). Residue aspartate 300 is part of the active site. Residues histidine 304 and 318 to 319 (FG) each bind substrate.

This sequence belongs to the metallo-dependent hydrolases superfamily. DHOase family. Class I DHOase subfamily. Zn(2+) serves as cofactor.

The catalysed reaction is (S)-dihydroorotate + H2O = N-carbamoyl-L-aspartate + H(+). It functions in the pathway pyrimidine metabolism; UMP biosynthesis via de novo pathway; (S)-dihydroorotate from bicarbonate: step 3/3. Catalyzes the reversible cyclization of carbamoyl aspartate to dihydroorotate. The sequence is that of Dihydroorotase from Fusobacterium nucleatum subsp. nucleatum (strain ATCC 25586 / DSM 15643 / BCRC 10681 / CIP 101130 / JCM 8532 / KCTC 2640 / LMG 13131 / VPI 4355).